A 315-amino-acid chain; its full sequence is 2-oxoglutarate and iron-dependent oxygenase domain-containing protein 3 (315 aa).

Residues 1–32 (MAPQRRGPPRVPEGNSAAERRHANSTKKDRLP) are disordered. The Cytoplasmic segment spans residues 1–41 (MAPQRRGPPRVPEGNSAAERRHANSTKKDRLPQEAQRTWLR). Residues 18 to 32 (AERRHANSTKKDRLP) show a composition bias toward basic and acidic residues. Residues 42 to 62 (IVALGVSLALVTFLLWSSAGI) form a helical; Signal-anchor for type II membrane protein membrane-spanning segment. Over 63–315 (DDDVAEVVAH…DHGIEDPVLT (253 aa)) the chain is Lumenal. One can recognise a Fe2OG dioxygenase domain in the interval 203–305 (KPTFFSRINS…AITIAFTCNP (103 aa)). A glycan (N-linked (GlcNAc...) asparagine) is linked at N211. Positions 226 and 228 each coordinate Fe cation. An N-linked (GlcNAc...) asparagine glycan is attached at N263. H284 contacts Fe cation. Residue R294 is part of the active site. R294 contacts 2-oxoglutarate.

It belongs to the OGFOD3 family. Fe(2+) is required as a cofactor. It depends on L-ascorbate as a cofactor.

It is found in the membrane. This is 2-oxoglutarate and iron-dependent oxygenase domain-containing protein 3 (Ogfod3) from Rattus norvegicus (Rat).